The primary structure comprises 117 residues: Large ribosomal subunit protein bL20 (117 aa).

It belongs to the bacterial ribosomal protein bL20 family.

Functionally, binds directly to 23S ribosomal RNA and is necessary for the in vitro assembly process of the 50S ribosomal subunit. It is not involved in the protein synthesizing functions of that subunit. In Lawsonia intracellularis (strain PHE/MN1-00), this protein is Large ribosomal subunit protein bL20.